The chain runs to 682 residues: Beta-galactosidase (682 aa).

The N-terminal stretch at 1-23 is a signal peptide; it reads MPGFLVRILPLLLPLLLLGPTRG. Residues 24 to 28 constitute a propeptide that is removed on maturation; it reads LRNAT. Residue Asn-26 is glycosylated (N-linked (GlcNAc...) asparagine). Residues Tyr-83, Glu-129, and Asn-187 each coordinate substrate. The active-site Proton donor is Glu-188. The cysteines at positions 195 and 230 are disulfide-linked. N-linked (GlcNAc...) asparagine glycosylation is present at Asn-247. Glu-268 acts as the Nucleophile in catalysis. Tyr-333 is a substrate binding site. Asn-464, Asn-498, Asn-545, and Asn-555 each carry an N-linked (GlcNAc...) asparagine glycan. Residues Cys-626 and Cys-634 are joined by a disulfide bond.

This sequence belongs to the glycosyl hydrolase 35 family. In terms of assembly, homodimer. May form higher multimers.

The protein localises to the lysosome. It carries out the reaction Hydrolysis of terminal non-reducing beta-D-galactose residues in beta-D-galactosides.. In terms of biological role, cleaves beta-linked terminal galactosyl residues from gangliosides, glycoproteins, and glycosaminoglycans. This chain is Beta-galactosidase (GLB1), found in Macaca fascicularis (Crab-eating macaque).